A 122-amino-acid polypeptide reads, in one-letter code: uncharacterized protein (122 aa).

This is an uncharacterized protein from Caenorhabditis elegans.